A 347-amino-acid polypeptide reads, in one-letter code: Adenine deaminase (347 aa).

3 residues coordinate Zn(2+): histidine 16, histidine 18, and histidine 204. Residue glutamate 207 is the Proton donor of the active site. Aspartate 285 serves as a coordination point for Zn(2+). Aspartate 286 lines the substrate pocket.

This sequence belongs to the metallo-dependent hydrolases superfamily. Adenosine and AMP deaminases family. Adenine deaminase type 2 subfamily. It depends on Zn(2+) as a cofactor.

The protein localises to the cytoplasm. Its subcellular location is the nucleus. The enzyme catalyses adenine + H2O + H(+) = hypoxanthine + NH4(+). In terms of biological role, catalyzes the hydrolytic deamination of adenine to hypoxanthine. Plays an important role in the purine salvage pathway and in nitrogen catabolism. In Candida glabrata (strain ATCC 2001 / BCRC 20586 / JCM 3761 / NBRC 0622 / NRRL Y-65 / CBS 138) (Yeast), this protein is Adenine deaminase.